A 543-amino-acid chain; its full sequence is Protein pbn1 (543 aa).

Topologically, residues 1 to 503 are lumenal; the sequence is MRRRITFVQR…KGFFQSKAIE (503 aa). The N-linked (GlcNAc...) asparagine glycan is linked to asparagine 409. Residues 504–524 traverse the membrane as a helical segment; the sequence is LGTMIVIGLGSLWVLWKLGAI. At 525-543 the chain is on the cytoplasmic side; it reads AWSSGTRPQRKSTKQKKSE.

It belongs to the PIGX family.

Its subcellular location is the endoplasmic reticulum membrane. It participates in glycolipid biosynthesis; glycosylphosphatidylinositol-anchor biosynthesis. Its function is as follows. Required for proper folding and/or the stability of a subset of proteins in the endoplasmic reticulum. Component of glycosylphosphatidylinositol-mannosyltransferase 1 which transfers the first of the 4 mannoses in the GPI-anchor precursors during GPI-anchor biosynthesis. Probably acts by stabilizing the mannosyltransferase gpi14. In Aspergillus oryzae (strain ATCC 42149 / RIB 40) (Yellow koji mold), this protein is Protein pbn1 (pbn1).